Reading from the N-terminus, the 440-residue chain is Murein DD-endopeptidase MepM (440 aa).

Residues 21–40 form a helical membrane-spanning segment; sequence VMLGSLTVLTLAVAVWRPYV. The region spanning 96–141 is the LysM domain; the sequence is HEYVVSTGDTLSSILNQYGIDMGDITQLAAADKELRNLKIGQQLSW. Position 314 (histidine 314) interacts with Zn(2+).

It belongs to the peptidase M23B family. Zn(2+) is required as a cofactor.

It is found in the cell membrane. It participates in cell wall biogenesis; cell wall polysaccharide biosynthesis. Functionally, a murein DD-endopeptidase with specificity for D-Ala-meso-diaminopimelic acid (mDAP) cross-links. Its role is probably to cleave D-Ala-mDAP cross-links to allow insertion of new glycans and thus cell wall expansion. Functionally redundant with MepM and MepH. This Escherichia coli O6:H1 (strain CFT073 / ATCC 700928 / UPEC) protein is Murein DD-endopeptidase MepM (mepM).